A 239-amino-acid polypeptide reads, in one-letter code: Tumor necrosis factor ligand superfamily member 8 (239 aa).

Residues 1 to 36 are disordered; that stretch reads MEPGLQQAGSCGAPSPDPAMQVQPGSVASPWRSTRP. The Cytoplasmic segment spans residues 1–43; sequence MEPGLQQAGSCGAPSPDPAMQVQPGSVASPWRSTRPWRSTSRS. The helical; Signal-anchor for type II membrane protein transmembrane segment at 44–67 threads the bilayer; that stretch reads YFYLSTTALVCLVVAVAIILVLVV. Residues 68 to 239 lie on the Extracellular side of the membrane; the sequence is QKKDSTPNTT…LSVFLYSSSD (172 aa). N-linked (GlcNAc...) asparagine glycosylation is found at N75, N86, N114, N158, N194, and N206. The THD domain maps to 103-230; it reads SWAYLQVSKH…TNTFPLDNVL (128 aa). An intrachain disulfide couples C156 to C182.

The protein belongs to the tumor necrosis factor family. As to quaternary structure, homotrimer.

It localises to the membrane. Its function is as follows. Cytokine that binds to TNFRSF8/CD30. Induces proliferation of T-cells. This is Tumor necrosis factor ligand superfamily member 8 (Tnfsf8) from Mus musculus (Mouse).